Reading from the N-terminus, the 251-residue chain is uncharacterized protein (251 aa).

An N-acetyltransferase domain is found at 4–152 (IEITKDNIED…YFQLMALTWN (149 aa)).

Belongs to the acetyltransferase family.

This is an uncharacterized protein from Bacillus subtilis (strain 168).